The primary structure comprises 194 residues: Fatty acid metabolism regulator protein (194 aa).

An HTH tetR-type domain is found at 5–65 (RPKYMQIIDA…SLFKEKMGQF (61 aa)). Positions 28–47 (QVSKIAKQAGVADGTIYLYF) form a DNA-binding region, H-T-H motif.

Homodimer. Binds to DNA.

The protein resides in the cytoplasm. Transcriptional regulator in fatty acid degradation. Represses transcription of genes required for fatty acid transport and beta-oxidation, including acdA, fadA, fadB, fadE, fadF, fadG, fadH, fadM, fadN, lcfA and lcfB. Binding of FadR to DNA is specifically inhibited by long chain fatty acyl-CoA compounds of 14-20 carbon atoms in length. In Bacillus subtilis (strain 168), this protein is Fatty acid metabolism regulator protein (fadR).